Reading from the N-terminus, the 62-residue chain is DNA-directed RNA polymerase subunit omega (62 aa).

This sequence belongs to the RNA polymerase subunit omega family. In terms of assembly, the RNAP catalytic core consists of 2 alpha, 1 beta, 1 beta' and 1 omega subunit. When a sigma factor is associated with the core the holoenzyme is formed, which can initiate transcription.

It carries out the reaction RNA(n) + a ribonucleoside 5'-triphosphate = RNA(n+1) + diphosphate. Promotes RNA polymerase assembly. Latches the N- and C-terminal regions of the beta' subunit thereby facilitating its interaction with the beta and alpha subunits. The chain is DNA-directed RNA polymerase subunit omega from Wigglesworthia glossinidia brevipalpis.